Consider the following 240-residue polypeptide: MEEKLLYAGKAKEMWTTEDEDQLRVVYLDQATQLNGKQKEHFAGKGAAAHAISDLVFHYLIDHGIETHFIKKLSATEDLVEKCAMVPLEFVTRNTVAGHFASRFGLEEGTALPQPVEENFYKDDELDDPFINESAAVALKMVTPAEFDRCWAICRQVDQLLTPLFEKAGMQLVDFKLEFGRRSRDNQIILADEFSPDNCRLWDTTTHHHLDKDVFRRNLADLTATYQEVYARLQAALKED.

It belongs to the SAICAR synthetase family.

The catalysed reaction is 5-amino-1-(5-phospho-D-ribosyl)imidazole-4-carboxylate + L-aspartate + ATP = (2S)-2-[5-amino-1-(5-phospho-beta-D-ribosyl)imidazole-4-carboxamido]succinate + ADP + phosphate + 2 H(+). It functions in the pathway purine metabolism; IMP biosynthesis via de novo pathway; 5-amino-1-(5-phospho-D-ribosyl)imidazole-4-carboxamide from 5-amino-1-(5-phospho-D-ribosyl)imidazole-4-carboxylate: step 1/2. This is Phosphoribosylaminoimidazole-succinocarboxamide synthase from Limosilactobacillus fermentum (strain NBRC 3956 / LMG 18251) (Lactobacillus fermentum).